A 131-amino-acid polypeptide reads, in one-letter code: Small ribosomal subunit protein bS6m (131 aa).

This sequence belongs to the bacterial ribosomal protein bS6 family. Component of the mitochondrial small ribosomal subunit (mt-SSU). Mature yeast 74S mitochondrial ribosomes consist of a small (37S) and a large (54S) subunit. The 37S small subunit contains a 15S ribosomal RNA (15S mt-rRNA) and 34 different proteins. The 54S large subunit contains a 21S rRNA (21S mt-rRNA) and 46 different proteins.

The protein resides in the mitochondrion. Its function is as follows. Component of the mitochondrial ribosome (mitoribosome), a dedicated translation machinery responsible for the synthesis of mitochondrial genome-encoded proteins, including at least some of the essential transmembrane subunits of the mitochondrial respiratory chain. The mitoribosomes are attached to the mitochondrial inner membrane and translation products are cotranslationally integrated into the membrane. This is Small ribosomal subunit protein bS6m (MRP17) from Saccharomyces cerevisiae (strain ATCC 204508 / S288c) (Baker's yeast).